A 375-amino-acid chain; its full sequence is Delta(12) fatty acid dehydrogenase (375 aa).

Transmembrane regions (helical) follow at residues 54-74 (IIAY…PAPL) and 77-97 (LAWP…WVIG). A Histidine box-1 motif is present at residues 98–102 (HECGH). The chain crosses the membrane as a helical span at residues 110–130 (WVDDTVGFILHSFLMTPYFSW). Residues 134–138 (HRNHH) carry the Histidine box-2 motif. Transmembrane regions (helical) follow at residues 172 to 192 (LLIM…TNIS), 218 to 238 (VLLS…AVAA), and 242 to 262 (AWVT…FDII). A Histidine box-3 motif is present at residues 308–312 (HVMHH).

It belongs to the fatty acid desaturase type 1 family. Requires Fe cation as cofactor. As to expression, seed.

The protein resides in the membrane. It carries out the reaction a (9Z,12Z)-octadecadienoyl-containing glycerolipid + 2 Fe(II)-[cytochrome b5] + O2 + 2 H(+) = a (9Z)-octadec-9-en-12-ynoyl-containing glycerolipid + 2 Fe(III)-[cytochrome b5] + 2 H2O. It participates in lipid metabolism; polyunsaturated fatty acid biosynthesis. Functionally, changes the delta-12 double bond of linoleic acid into a triple bond in the biosynthesis of crepenynic acid. This chain is Delta(12) fatty acid dehydrogenase, found in Crepis alpina (Hawksbeard).